The following is a 158-amino-acid chain: NAD(P)H-quinone oxidoreductase subunit J, chloroplastic (158 aa).

Belongs to the complex I 30 kDa subunit family. In terms of assembly, NDH is composed of at least 16 different subunits, 5 of which are encoded in the nucleus.

The protein resides in the plastid. It localises to the chloroplast thylakoid membrane. It carries out the reaction a plastoquinone + NADH + (n+1) H(+)(in) = a plastoquinol + NAD(+) + n H(+)(out). The catalysed reaction is a plastoquinone + NADPH + (n+1) H(+)(in) = a plastoquinol + NADP(+) + n H(+)(out). Functionally, NDH shuttles electrons from NAD(P)H:plastoquinone, via FMN and iron-sulfur (Fe-S) centers, to quinones in the photosynthetic chain and possibly in a chloroplast respiratory chain. The immediate electron acceptor for the enzyme in this species is believed to be plastoquinone. Couples the redox reaction to proton translocation, and thus conserves the redox energy in a proton gradient. This chain is NAD(P)H-quinone oxidoreductase subunit J, chloroplastic, found in Morus indica (Mulberry).